A 460-amino-acid chain; its full sequence is Muscarinic acetylcholine receptor M1 (460 aa).

Residues 1 to 22 (MNTSVPPAVSPNITVLAPGKGP) are Extracellular-facing. Asn2 and Asn12 each carry an N-linked (GlcNAc...) asparagine glycan. Residues 23 to 48 (WQVAFIGITTGLLSLATVTGNLLVLI) traverse the membrane as a helical segment. Over 49–62 (SFKVNTELKTVNNY) the chain is Cytoplasmic. A helical transmembrane segment spans residues 63-84 (FLLSLACADLIIGTFSMNLYTT). Residues 85–95 (YLLMGHWALGT) are Extracellular-facing. The helical transmembrane segment at 96-121 (LACDLWLALDYVASNASVMNLLLISF) threads the bilayer. Cys98 and Cys178 are disulfide-bonded. Residues 122-142 (DRYFSVTRPLSYRAKRTPRRA) lie on the Cytoplasmic side of the membrane. The chain crosses the membrane as a helical span at residues 143–164 (ALMIGLAWLVSFVLWAPAILFW). Over 165–185 (QYLVGERTVLAGQCYIQFLSQ) the chain is Extracellular. Residues 186–209 (PIITFGTAMAAFYLPVTVMCTLYW) traverse the membrane as a helical segment. The Cytoplasmic portion of the chain corresponds to 210-366 (RIYRETENRA…LVKEKKAART (157 aa)). 3 disordered regions span residues 225 to 257 (LQGS…SPPG), 274 to 297 (WKEE…EEPG), and 310 to 351 (EAQA…QLAK). Thr230 is subject to Phosphothreonine. The segment covering 238–257 (SSSSERSQPGAEGSPESPPG) has biased composition (low complexity). Phosphoserine is present on Ser254. The segment covering 328–343 (RPTKKGRDRGGKGQKP) has biased composition (basic residues). Residues 367–390 (LSAILLAFILTWTPYNIMVLVSTF) form a helical membrane-spanning segment. Over 391–397 (CKDCVPE) the chain is Extracellular. Residues 398–420 (TLWELGYWLCYVNSTVNPMCYAL) form a helical membrane-spanning segment. Residues 421-460 (CNKAFRDTFRLLLLCRWDKRRWRKIPKRPGSVHRTPSRQC) lie on the Cytoplasmic side of the membrane. Ser451 is subject to Phosphoserine. Thr455 carries the post-translational modification Phosphothreonine. Ser457 carries the post-translational modification Phosphoserine.

Belongs to the G-protein coupled receptor 1 family. Muscarinic acetylcholine receptor subfamily. CHRM1 sub-subfamily. As to quaternary structure, interacts with GPRASP2. Interacts with TMEM147.

The protein resides in the cell membrane. The protein localises to the postsynaptic cell membrane. In terms of biological role, the muscarinic acetylcholine receptor mediates various cellular responses, including inhibition of adenylate cyclase, breakdown of phosphoinositides and modulation of potassium channels through the action of G proteins. Primary transducing effect is Pi turnover. The sequence is that of Muscarinic acetylcholine receptor M1 (Chrm1) from Mus musculus (Mouse).